An 86-amino-acid polypeptide reads, in one-letter code: uncharacterized protein (86 aa).

To M.jannaschii MJ1173.

This is an uncharacterized protein from Methanosarcina mazei (strain ATCC BAA-159 / DSM 3647 / Goe1 / Go1 / JCM 11833 / OCM 88) (Methanosarcina frisia).